The chain runs to 668 residues: Ras guanine nucleotide exchange factor D (668 aa).

The 198-residue stretch at 27–224 folds into the Rho-GAP domain; that stretch reads KKLESIFGIA…LMVMDIDEFD (198 aa). Residues 237 to 362 form the N-terminal Ras-GEF domain; that stretch reads GESIVKAATF…YFQTFFKPVI (126 aa). The Ras-GEF domain maps to 433–663; the sequence is GSNIIAQQIT…HSISHKLEPR (231 aa).

Promotes the exchange of Ras-bound GDP by GTP. This chain is Ras guanine nucleotide exchange factor D (gefD), found in Dictyostelium discoideum (Social amoeba).